We begin with the raw amino-acid sequence, 149 residues long: Large ribosomal subunit protein bL9 (149 aa).

This sequence belongs to the bacterial ribosomal protein bL9 family.

Binds to the 23S rRNA. The protein is Large ribosomal subunit protein bL9 of Teredinibacter turnerae (strain ATCC 39867 / T7901).